A 93-amino-acid chain; its full sequence is Protein FptB (93 aa).

Residues 1-25 (MPRQSGFGWAWRVPLALAGSLAAAT) form the signal peptide. Transmembrane regions (helical) follow at residues 44 to 64 (LYAG…GGLL) and 71 to 91 (FAWR…LLAG).

It localises to the cell membrane. May play some role in transport of Fe(3+)-pyochelin. In Pseudomonas aeruginosa (strain ATCC 15692 / DSM 22644 / CIP 104116 / JCM 14847 / LMG 12228 / 1C / PRS 101 / PAO1), this protein is Protein FptB (fptB).